Reading from the N-terminus, the 864-residue chain is Leucine--tRNA ligase (864 aa).

Residues 42–52 carry the 'HIGH' region motif; it reads PYPSGKLHMGH. Positions 624–628 match the 'KMSKS' region motif; that stretch reads KMSKS. Lysine 627 provides a ligand contact to ATP.

The protein belongs to the class-I aminoacyl-tRNA synthetase family.

Its subcellular location is the cytoplasm. It catalyses the reaction tRNA(Leu) + L-leucine + ATP = L-leucyl-tRNA(Leu) + AMP + diphosphate. The chain is Leucine--tRNA ligase from Burkholderia pseudomallei (strain 668).